The chain runs to 231 residues: Uracil-DNA glycosylase (231 aa).

The Proton acceptor role is filled by Asp-74.

The protein belongs to the uracil-DNA glycosylase (UDG) superfamily. UNG family.

It localises to the cytoplasm. It carries out the reaction Hydrolyzes single-stranded DNA or mismatched double-stranded DNA and polynucleotides, releasing free uracil.. Its function is as follows. Excises uracil residues from the DNA which can arise as a result of misincorporation of dUMP residues by DNA polymerase or due to deamination of cytosine. The polypeptide is Uracil-DNA glycosylase (Campylobacter jejuni subsp. doylei (strain ATCC BAA-1458 / RM4099 / 269.97)).